A 517-amino-acid chain; its full sequence is Amidophosphoribosyltransferase (517 aa).

Met-1 is modified (N-acetylmethionine). Positions 1 to 11 (MELEELGIREE) are excised as a propeptide. Cys-12 acts as the Nucleophile in catalysis. The region spanning 12-261 (CGVFGCIASG…PGEIVEISRH (250 aa)) is the Glutamine amidotransferase type-2 domain. Cys-280 lines the [4Fe-4S] cluster pocket. Residues Ser-327, Asp-389, and Asp-390 each contribute to the Mg(2+) site. Residues Cys-426, Cys-503, and Cys-506 each coordinate [4Fe-4S] cluster.

This sequence in the C-terminal section; belongs to the purine/pyrimidine phosphoribosyltransferase family. In terms of assembly, homotetramer. Mg(2+) serves as cofactor. Requires [4Fe-4S] cluster as cofactor. Ubiquitously expressed.

It catalyses the reaction 5-phospho-beta-D-ribosylamine + L-glutamate + diphosphate = 5-phospho-alpha-D-ribose 1-diphosphate + L-glutamine + H2O. It functions in the pathway purine metabolism; IMP biosynthesis via de novo pathway; N(1)-(5-phospho-D-ribosyl)glycinamide from 5-phospho-alpha-D-ribose 1-diphosphate: step 1/2. Catalyzes the formation of phosphoribosylamine from phosphoribosylpyrophosphate (PRPP) and glutamine. In Homo sapiens (Human), this protein is Amidophosphoribosyltransferase (PPAT).